We begin with the raw amino-acid sequence, 329 residues long: Cytosolic arginine sensor for mTORC1 subunit 2 (329 aa).

2 consecutive ACT domains span residues 72-139 and 262-322; these read ADAT…MHTL and ELWK…NALQ.

The protein belongs to the GATS family. May form homodimers and heterodimers.

Its subcellular location is the cytoplasm. The protein resides in the cytosol. Functionally, functions as a negative regulator of the TORC1 signaling pathway. In Xenopus laevis (African clawed frog), this protein is Cytosolic arginine sensor for mTORC1 subunit 2.